We begin with the raw amino-acid sequence, 392 residues long: Caveolae-associated protein 1 (392 aa).

Position 1 is an N-acetylmethionine (Met-1). Residues 1 to 10 (MEDVTLHIVE) are compositionally biased toward basic and acidic residues. Positions 1–45 (MEDVTLHIVERPYSGYPDASSEGPEPTPGEARATEEPSGTGSDEL) are disordered. A required for homotrimerization and for interaction with CAVIN2 and CAVIN3 region spans residues 1 to 100 (MEDVTLHIVE…IQGELSKLGK (100 aa)). Phosphoserine occurs at positions 21 and 38. At Thr-40 the chain carries Phosphothreonine. Ser-42 and Ser-48 each carry phosphoserine. Residues 54 to 64 (VLVLSLLDKII) form a nuclear export signal region. Residues 55-77 (LVLSLLDKIIGAVDQIQLTQAQL) are leucine-zipper 1. Lys-118 is covalently cross-linked (Glycyl lysine isopeptide (Lys-Gly) (interchain with G-Cter in SUMO2)). A Phosphoserine modification is found at Ser-120. Residue Lys-124 forms a Glycyl lysine isopeptide (Lys-Gly) (interchain with G-Cter in SUMO2) linkage. The segment at 138–154 (KKLEVNEAELLRRRNFK) is nuclear localization signal. A Phosphotyrosine modification is found at Tyr-158. Lys-163 is covalently cross-linked (Glycyl lysine isopeptide (Lys-Gly) (interchain with G-Cter in SUMO1); alternate). Residue Lys-163 forms a Glycyl lysine isopeptide (Lys-Gly) (interchain with G-Cter in SUMO2); alternate linkage. Lys-167 participates in a covalent cross-link: Glycyl lysine isopeptide (Lys-Gly) (interchain with G-Cter in SUMO2). A leucine-zipper 2 region spans residues 168–188 (LSVSKSLKESEALPEKEGDEL). Phosphoserine occurs at positions 169 and 171. Lys-172 participates in a covalent cross-link: Glycyl lysine isopeptide (Lys-Gly) (interchain with G-Cter in SUMO2). Residues Ser-173 and Ser-177 each carry the phosphoserine modification. The span at 173–183 (SLKESEALPEK) shows a compositional bias: basic and acidic residues. Residues 173 to 198 (SLKESEALPEKEGDELGEGERPEEDA) are disordered. Positions 184–198 (EGDELGEGERPEEDA) are enriched in acidic residues. A coiled-coil region spans residues 201–284 (IELSSDEAVE…RMNKLGTRLV (84 aa)). Phosphoserine occurs at positions 204 and 205. Residues 235-251 (KKAFSKEKMEKTKVRTR) are nuclear localization signal. The leucine-zipper 3 stretch occupies residues 259-299 (LKTKENLEKTRHTLEKRMNKLGTRLVPVERREKLKTSRDKL). Ser-302 is subject to Phosphoserine. Phosphothreonine is present on Thr-304. Residue Tyr-310 is modified to Phosphotyrosine. Residue Lys-328 forms a Glycyl lysine isopeptide (Lys-Gly) (interchain with G-Cter in SUMO2) linkage. The tract at residues 347-367 (GPDDDEVGAERGAETDLLRGS) is disordered. A compositionally biased stretch (basic and acidic residues) spans 354-363 (GAERGAETDL). Residues Ser-367, Ser-368, Ser-381, Ser-389, and Ser-391 each carry the phosphoserine modification.

The protein belongs to the CAVIN family. In terms of assembly, component of the CAVIN complex composed of CAVIN1, CAVIN2, CAVIN3 and CAVIN4. Interacts with RNA polymerase I subunit POLR1A/RPA1 and TTF1. Binds the 3' end of pre-rRNA. Interacts with transcription factor ZNF148. Interacts with LIPE in the adipocyte cytoplasm. Interacts with CAV1, CAV3, CAVIN2, CAVIN3 and CAVIN4. Phosphorylated. Present in active and inactive forms. Changes in phosphorylation pattern may alter activity. Phosphorylation at Tyr-158 is essential for its function in the regulation of ribosomal transcriptional activity. Post-translationally, monoubiquitinated. As to expression, expressed in the adipocyte (at protein level). Expressed in all striated and smooth muscles tested including diaphragm, esophageal striated muscle, fibroblast, endocardial endothelium, epicardial mesothelium, intestinal smooth muscle, masseter, soleus muscle, vascular smooth muscle and white gastrocnemius muscle (at protein level). Expressed in the endothelium and perineural sheath (at protein level). Not expressed in hepatocytes.

It localises to the membrane. It is found in the caveola. The protein localises to the cell membrane. The protein resides in the microsome. Its subcellular location is the endoplasmic reticulum. It localises to the cytoplasm. It is found in the cytosol. The protein localises to the mitochondrion. The protein resides in the nucleus. Plays an important role in caveolae formation and organization. Essential for the formation of caveolae in all tissues. Core component of the CAVIN complex which is essential for recruitment of the complex to the caveolae in presence of calveolin-1 (CAV1). Essential for normal oligomerization of CAV1. Promotes ribosomal transcriptional activity in response to metabolic challenges in the adipocytes and plays an important role in the formation of the ribosomal transcriptional loop. Dissociates transcription complexes paused by DNA-bound TTF1, thereby releasing both RNA polymerase I and pre-RNA from the template. The caveolae biogenesis pathway is required for the secretion of proteins such as GASK1A. The chain is Caveolae-associated protein 1 from Rattus norvegicus (Rat).